A 313-amino-acid chain; its full sequence is Beta-ribofuranosylphenol 5'-phosphate synthase (313 aa).

It belongs to the beta-RFA-P synthase family. In terms of assembly, homodimer.

The catalysed reaction is 5-phospho-alpha-D-ribose 1-diphosphate + 4-hydroxybenzoate + H(+) = 4-(beta-D-ribofuranosyl)phenol 5'-phosphate + CO2 + diphosphate. It carries out the reaction 4-aminobenzoate + 5-phospho-alpha-D-ribose 1-diphosphate + H(+) = 4-(beta-D-ribofuranosyl)aminobenzene 5'-phosphate + CO2 + diphosphate. Its pathway is cofactor biosynthesis; 5,6,7,8-tetrahydromethanopterin biosynthesis. In terms of biological role, catalyzes the condensation of 4-hydroxybenzoate (HB) with 5-phospho-alpha-D-ribose 1-diphosphate (PRPP) to produce beta-ribofuranosylphenol 5'-phosphate (beta-RFH-P). Also catalyzes the condensation of 4-aminobenzoate (pABA) with PRPP to produce beta-ribofuranosylaminobenzene 5'-phosphate (beta-RFA-P). The sequence is that of Beta-ribofuranosylphenol 5'-phosphate synthase from Archaeoglobus fulgidus (strain ATCC 49558 / DSM 4304 / JCM 9628 / NBRC 100126 / VC-16).